The sequence spans 275 residues: MIHFTKMHGLGNDFMVVDGVTQNVFFSPEQIRRLADRNFGIGFDQLLLVEPPYDPDLDFHYRIFNADGSEVEQCGNGARCFARFVRNKGLTQKHKIKVSTSAGKMTLRLERDGGVTVNMGVPILDPAQIPFKAKKFEKTYLLQSAQQTFLCGAVSMGNPHVVLEVDDITQAPVADVGAQLTRHERFPKGVNVGFMQVVAPDHIKLRVYERGAAETLACGSGACAAAVVGQLQGKLGSRVRVDLPGGSLTINWEGEGKPLWMTGPAQQVYDGQIQL.

3 residues coordinate substrate: Asn12, Gln45, and Asn65. Residue Cys74 is the Proton donor of the active site. Substrate contacts are provided by residues 75 to 76 (GN), Asn158, Asn191, and 209 to 210 (ER). The active-site Proton acceptor is the Cys218. 219–220 (GS) is a binding site for substrate.

This sequence belongs to the diaminopimelate epimerase family. As to quaternary structure, homodimer.

It localises to the cytoplasm. It carries out the reaction (2S,6S)-2,6-diaminopimelate = meso-2,6-diaminopimelate. Its pathway is amino-acid biosynthesis; L-lysine biosynthesis via DAP pathway; DL-2,6-diaminopimelate from LL-2,6-diaminopimelate: step 1/1. Catalyzes the stereoinversion of LL-2,6-diaminopimelate (L,L-DAP) to meso-diaminopimelate (meso-DAP), a precursor of L-lysine and an essential component of the bacterial peptidoglycan. In Shewanella amazonensis (strain ATCC BAA-1098 / SB2B), this protein is Diaminopimelate epimerase.